A 77-amino-acid polypeptide reads, in one-letter code: Acyl carrier protein (77 aa).

A Carrier domain is found at 2 to 77 (STVEERVKKI…DAIDYIVAHT (76 aa)). At serine 37 the chain carries O-(pantetheine 4'-phosphoryl)serine.

It belongs to the acyl carrier protein (ACP) family. Post-translationally, 4'-phosphopantetheine is transferred from CoA to a specific serine of apo-ACP by AcpS. This modification is essential for activity because fatty acids are bound in thioester linkage to the sulfhydryl of the prosthetic group.

The protein resides in the cytoplasm. Its pathway is lipid metabolism; fatty acid biosynthesis. Functionally, carrier of the growing fatty acid chain in fatty acid biosynthesis. The protein is Acyl carrier protein of Marinobacter nauticus (strain ATCC 700491 / DSM 11845 / VT8) (Marinobacter aquaeolei).